Reading from the N-terminus, the 276-residue chain is Large ribosomal subunit protein uL2 (276 aa).

Residues 219 to 268 (TVRGSVMNPNDHPHGGGEGRQPVGRKSPMTPWGKPALGLKTRNKKAKSSK) form a disordered region.

Belongs to the universal ribosomal protein uL2 family. In terms of assembly, part of the 50S ribosomal subunit. Forms a bridge to the 30S subunit in the 70S ribosome.

Its function is as follows. One of the primary rRNA binding proteins. Required for association of the 30S and 50S subunits to form the 70S ribosome, for tRNA binding and peptide bond formation. It has been suggested to have peptidyltransferase activity; this is somewhat controversial. Makes several contacts with the 16S rRNA in the 70S ribosome. The protein is Large ribosomal subunit protein uL2 of Lactococcus lactis subsp. cremoris (strain MG1363).